The primary structure comprises 556 residues: Genetic interactor of prohibitins 3, mitochondrial (556 aa).

A mitochondrion-targeting transit peptide spans 1-21; that stretch reads MLNLCHALRGVRQFSCSVIVK. In terms of domain architecture, CP-type G spans 113–305; sequence ESTLNDILNY…LFDLPGYSTS (193 aa).

This sequence belongs to the TRAFAC class YlqF/YawG GTPase family. GEP3 subfamily.

The protein localises to the mitochondrion. Functionally, interacts genetically with prohibitins and thus may be involved in the mitochondrial lipid metabolism. This chain is Genetic interactor of prohibitins 3, mitochondrial (GEP3), found in Saccharomyces cerevisiae (strain Zymaflore VL3) (Baker's yeast).